We begin with the raw amino-acid sequence, 471 residues long: MKIKTRFAPSPTGYLHVGGARTALYSWLFSRHLGGEFVLRIEDTDLGRSTQEAIDAIMDGMNWLNLDWDEGPYFQTKRFDRYNAVIDQMLDAGTAYRCYCSKERLEALREAQMANGEKPRYDGHCRDSQCTHGADEPSVVRFRNPQEGSVIFDDKIRGPIEFSNQELDDLIIRRTDGSPTYNFCVVIDDWDMEITHVIRGEDHINNTPRQINILKALGAPVPEYAHVSMILGDDGKKLSKRHGAVGVMQYRDDGYLPEALLNYLVRLGWSHGDQEIFSIEEMTQLFTLDAVSKSASAFNTEKLQWLNHHYINSLPPEQVAVHLSWHVEQLGIDTRNGPELVEIVKLLGERCKTLKEMAESCRYFYEEFDAFDVDAAKKHLRPIARQPLEAVKVKLAAITEWTTENVHNAIQGTADELGVGMGKVGMPLRVAVTGVGQSPGMDVTVHAIGQARTLARIDKALAFISEREAQQ.

The short motif at 9 to 19 (PSPTGYLHVGG) is the 'HIGH' region element. 4 residues coordinate Zn(2+): C98, C100, C125, and D127. The 'KMSKS' region signature appears at 237–241 (KLSKR). Residue K240 participates in ATP binding.

It belongs to the class-I aminoacyl-tRNA synthetase family. Glutamate--tRNA ligase type 1 subfamily. Monomer. Zn(2+) serves as cofactor.

The protein resides in the cytoplasm. It catalyses the reaction tRNA(Glu) + L-glutamate + ATP = L-glutamyl-tRNA(Glu) + AMP + diphosphate. In terms of biological role, catalyzes the attachment of glutamate to tRNA(Glu) in a two-step reaction: glutamate is first activated by ATP to form Glu-AMP and then transferred to the acceptor end of tRNA(Glu). The protein is Glutamate--tRNA ligase of Yersinia pestis.